The sequence spans 528 residues: Glutamate--cysteine ligase (528 aa).

It belongs to the glutamate--cysteine ligase type 1 family. Type 1 subfamily.

The enzyme catalyses L-cysteine + L-glutamate + ATP = gamma-L-glutamyl-L-cysteine + ADP + phosphate + H(+). Its pathway is sulfur metabolism; glutathione biosynthesis; glutathione from L-cysteine and L-glutamate: step 1/2. The chain is Glutamate--cysteine ligase from Janthinobacterium sp. (strain Marseille) (Minibacterium massiliensis).